A 407-amino-acid chain; its full sequence is 1-deoxy-D-xylulose 5-phosphate reductoisomerase (407 aa).

T25, G26, S27, I28, N53, and N136 together coordinate NADPH. A 1-deoxy-D-xylulose 5-phosphate-binding site is contributed by K137. E138 contributes to the NADPH binding site. Position 162 (D162) interacts with Mn(2+). 1-deoxy-D-xylulose 5-phosphate is bound by residues S163, E164, S188, and H211. E164 contributes to the Mn(2+) binding site. G217 serves as a coordination point for NADPH. 4 residues coordinate 1-deoxy-D-xylulose 5-phosphate: S224, N229, K230, and E233. Residue E233 coordinates Mn(2+).

It belongs to the DXR family. Requires Mg(2+) as cofactor. Mn(2+) serves as cofactor.

It carries out the reaction 2-C-methyl-D-erythritol 4-phosphate + NADP(+) = 1-deoxy-D-xylulose 5-phosphate + NADPH + H(+). Its pathway is isoprenoid biosynthesis; isopentenyl diphosphate biosynthesis via DXP pathway; isopentenyl diphosphate from 1-deoxy-D-xylulose 5-phosphate: step 1/6. Catalyzes the NADPH-dependent rearrangement and reduction of 1-deoxy-D-xylulose-5-phosphate (DXP) to 2-C-methyl-D-erythritol 4-phosphate (MEP). The sequence is that of 1-deoxy-D-xylulose 5-phosphate reductoisomerase from Nitrobacter winogradskyi (strain ATCC 25391 / DSM 10237 / CIP 104748 / NCIMB 11846 / Nb-255).